Reading from the N-terminus, the 362-residue chain is DNA replication and repair protein RecF (362 aa).

ATP is bound at residue 30–37 (GLNAQGKS).

It belongs to the RecF family.

The protein resides in the cytoplasm. In terms of biological role, the RecF protein is involved in DNA metabolism; it is required for DNA replication and normal SOS inducibility. RecF binds preferentially to single-stranded, linear DNA. It also seems to bind ATP. This Thermoanaerobacter sp. (strain X514) protein is DNA replication and repair protein RecF.